The primary structure comprises 132 residues: Small ribosomal subunit protein uS8 (132 aa).

It belongs to the universal ribosomal protein uS8 family. As to quaternary structure, part of the 30S ribosomal subunit. Contacts proteins S5 and S12.

Its function is as follows. One of the primary rRNA binding proteins, it binds directly to 16S rRNA central domain where it helps coordinate assembly of the platform of the 30S subunit. The protein is Small ribosomal subunit protein uS8 of Streptococcus pneumoniae serotype 19F (strain G54).